The primary structure comprises 110 residues: Holo-[acyl-carrier-protein] synthase (110 aa).

Mg(2+) is bound by residues Asp8 and Glu54.

It belongs to the P-Pant transferase superfamily. AcpS family. The cofactor is Mg(2+).

It localises to the cytoplasm. The enzyme catalyses apo-[ACP] + CoA = holo-[ACP] + adenosine 3',5'-bisphosphate + H(+). Functionally, transfers the 4'-phosphopantetheine moiety from coenzyme A to a Ser of acyl-carrier-protein. This chain is Holo-[acyl-carrier-protein] synthase, found in Mycoplasma capricolum subsp. capricolum (strain California kid / ATCC 27343 / NCTC 10154).